A 142-amino-acid chain; its full sequence is Peptidyl-prolyl cis-trans isomerase FKBP2 (142 aa).

Residues 1-21 form the signal peptide; the sequence is MRLSWFRVLTVLSICLSAVAT. One can recognise a PPIase FKBP-type domain in the interval 49 to 137; that stretch reads GDVLHMHYTG…VFEVELLKIE (89 aa). The short motif at 139–142 is the Prevents secretion from ER element; the sequence is RTEL.

It belongs to the FKBP-type PPIase family. FKBP2 subfamily. In terms of assembly, interacts with ARFGEF1/BIG1 and the C-terminal of EPB41L2. In terms of tissue distribution, T-cells and thymus.

Its subcellular location is the endoplasmic reticulum membrane. The catalysed reaction is [protein]-peptidylproline (omega=180) = [protein]-peptidylproline (omega=0). Inhibited by both FK506 and rapamycin. PPIases accelerate the folding of proteins. It catalyzes the cis-trans isomerization of proline imidic peptide bonds in oligopeptides. The polypeptide is Peptidyl-prolyl cis-trans isomerase FKBP2 (FKBP2) (Homo sapiens (Human)).